Reading from the N-terminus, the 787-residue chain is Vacuolar protein sorting-associated protein 35A (787 aa).

Methionine 1 carries the N-acetylmethionine modification.

It belongs to the VPS35 family. In terms of assembly, component of the retromer complex which consists of VPS29 (MAG1), VPS26 (VPS26A or VPS26B), VPS35 (VPS35A or VPS35B or VPS35C), VPS5/17 (SNX1 or SNX2A or SNX2B). Component of a retromer subcomplex consisting of VPS29 (MAG1), VPS26 (VPS26A or VPS26B), VPS35 (VPS35A or VPS35B or VPS35C). Interacts with RABG3F.

It localises to the cytoplasm. The protein localises to the endosome membrane. The protein resides in the prevacuolar compartment membrane. It is found in the golgi apparatus. Its subcellular location is the trans-Golgi network membrane. In terms of biological role, plays a role in vesicular protein sorting. Component of the membrane-associated retromer complex which is essential in endosome-to-Golgi retrograde transport. Also involved in the efficient sorting of seed storage proteins. Binds alone to endosomal membranes and is required for recruitment of VPS26 and VPS29 to membrane. The VPS29-VPS26-VPS35 subcomplex may be involved in recycling of specific cargos from endosome to the plasma membrane. This is Vacuolar protein sorting-associated protein 35A (VPS35A) from Arabidopsis thaliana (Mouse-ear cress).